The sequence spans 159 residues: 2-C-methyl-D-erythritol 2,4-cyclodiphosphate synthase (159 aa).

The a divalent metal cation site is built by Asp10 and His12. 4-CDP-2-C-methyl-D-erythritol 2-phosphate contacts are provided by residues 10-12 (DVH) and 36-37 (HS). A divalent metal cation is bound at residue His44. 4-CDP-2-C-methyl-D-erythritol 2-phosphate is bound by residues 58 to 60 (DIG), 134 to 137 (TTSE), Phe141, and Arg144.

This sequence belongs to the IspF family. Homotrimer. The cofactor is a divalent metal cation.

It carries out the reaction 4-CDP-2-C-methyl-D-erythritol 2-phosphate = 2-C-methyl-D-erythritol 2,4-cyclic diphosphate + CMP. It functions in the pathway isoprenoid biosynthesis; isopentenyl diphosphate biosynthesis via DXP pathway; isopentenyl diphosphate from 1-deoxy-D-xylulose 5-phosphate: step 4/6. In terms of biological role, involved in the biosynthesis of isopentenyl diphosphate (IPP) and dimethylallyl diphosphate (DMAPP), two major building blocks of isoprenoid compounds. Catalyzes the conversion of 4-diphosphocytidyl-2-C-methyl-D-erythritol 2-phosphate (CDP-ME2P) to 2-C-methyl-D-erythritol 2,4-cyclodiphosphate (ME-CPP) with a corresponding release of cytidine 5-monophosphate (CMP). The sequence is that of 2-C-methyl-D-erythritol 2,4-cyclodiphosphate synthase from Cereibacter sphaeroides (strain ATCC 17025 / ATH 2.4.3) (Rhodobacter sphaeroides).